A 381-amino-acid polypeptide reads, in one-letter code: Pentatricopeptide repeat-containing protein 2, mitochondrial (381 aa).

A PPR repeat occupies 157–191; sequence DTTSFNITIDMLFNKQLYESGLEVVGEMKKQGVSL.

It belongs to the PTCD2 family.

It localises to the mitochondrion. Its function is as follows. Involved in mitochondrial RNA maturation and mitochondrial respiratory chain function. This chain is Pentatricopeptide repeat-containing protein 2, mitochondrial (ptcd2), found in Danio rerio (Zebrafish).